Here is a 1816-residue protein sequence, read N- to C-terminus: Laminin subunit alpha-4 (1816 aa).

The first 24 residues, 1-24 (MGWSTAWCSVLALWLLWCAVCSNA), serve as a signal peptide directing secretion. Serine 39 is a glycosylation site (O-linked (Xyl...) (chondroitin sulfate) serine). 12 disulfide bridges follow: cysteine 82–cysteine 91, cysteine 84–cysteine 98, cysteine 101–cysteine 110, cysteine 113–cysteine 129, cysteine 132–cysteine 146, cysteine 134–cysteine 155, cysteine 157–cysteine 166, cysteine 169–cysteine 184, cysteine 187–cysteine 202, cysteine 189–cysteine 209, cysteine 212–cysteine 221, and cysteine 224–cysteine 238. Laminin EGF-like domains are found at residues 82-131 (CDCN…FCQP), 132-186 (CPCP…TCKK), and 187-240 (CDCS…NCAV). Asparagine 104 carries N-linked (GlcNAc...) asparagine glycosylation. Asparagine 215 carries an N-linked (GlcNAc...) asparagine glycan. Residues 241 to 255 (CNCGGGPCDSVTGEC) form the Laminin EGF-like 4; truncated domain. Residues 256–825 (LEEGFEVPTG…AQTRSVASKI (570 aa)) form a domain II and I region. N-linked (GlcNAc...) asparagine glycosylation is found at asparagine 308, asparagine 333, asparagine 458, asparagine 550, asparagine 571, asparagine 574, asparagine 631, and asparagine 639. Residues 431–523 (THRELVDEEA…ERVKEQMEVV (93 aa)) are a coiled coil. Positions 556–604 (AEIDGAKNELQGKLSNLSNLSHDLVQEATDHAYNLQQEADELSRNLHSS) form a coiled coil. A coiled-coil region spans residues 655–717 (IIYHKDESDN…AVKQLQAAER (63 aa)). The short motif at 717 to 719 (RGD) is the Cell attachment site element. 5 N-linked (GlcNAc...) asparagine glycosylation sites follow: asparagine 735, asparagine 751, asparagine 754, asparagine 780, and asparagine 803. Residues 770–799 (AVDSARDAVRNLTEVVPQLLDQLRTVEQKR) are a coiled coil. Laminin G-like domains follow at residues 826–1030 (QVSM…SVPC), 1042–1222 (AASY…GYGC), and 1229–1397 (SRRA…LYEC). Cysteine 1000 and cysteine 1030 are joined by a disulfide. N-linked (GlcNAc...) asparagine glycosylation is present at asparagine 1088. Cysteine 1196 and cysteine 1222 are disulfide-bonded. Asparagine 1283 and asparagine 1361 each carry an N-linked (GlcNAc...) asparagine glycan. Cysteine 1365 and cysteine 1397 are disulfide-bonded. Residues 1409–1419 (KKGKNSSKPKT) are compositionally biased toward basic residues. The segment at 1409–1433 (KKGKNSSKPKTNKQGEKSKDAPSWD) is disordered. Basic and acidic residues predominate over residues 1421–1430 (KQGEKSKDAP). Laminin G-like domains follow at residues 1462-1633 (AYQY…VTPC) and 1640-1813 (TGTY…INSC). 2 disulfides stabilise this stretch: cysteine 1610–cysteine 1633 and cysteine 1785–cysteine 1813.

In terms of assembly, laminin is a complex glycoprotein, consisting of three different polypeptide chains (alpha, beta, gamma), which are bound to each other by disulfide bonds into a cross-shaped molecule comprising one long and three short arms with globules at each end. Alpha-4 is a subunit of laminin-8 (laminin-411), laminin-9 (laminin-421) and laminin-14 (laminin-423). In terms of tissue distribution, strongly expressed in peripheral nerves, cardiac muscle, fat, dermis, lung stroma, aortic endothelium, endocardium and endothelium of blood vessels in skin and brain.

Its subcellular location is the secreted. It localises to the extracellular space. The protein localises to the extracellular matrix. The protein resides in the basement membrane. Its function is as follows. Binding to cells via a high affinity receptor, laminin is thought to mediate the attachment, migration and organization of cells into tissues during embryonic development by interacting with other extracellular matrix components. This chain is Laminin subunit alpha-4 (Lama4), found in Mus musculus (Mouse).